The following is a 199-amino-acid chain: Recombination protein RecR (199 aa).

The C4-type zinc finger occupies 57 to 72 (CPICGNITEKEICDIC). The Toprim domain maps to 80–176 (TTIMVVEQPK…KVTRLAAGLS (97 aa)).

The protein belongs to the RecR family.

May play a role in DNA repair. It seems to be involved in an RecBC-independent recombinational process of DNA repair. It may act with RecF and RecO. The sequence is that of Recombination protein RecR from Lactobacillus acidophilus (strain ATCC 700396 / NCK56 / N2 / NCFM).